Here is a 911-residue protein sequence, read N- to C-terminus: Desmoglein-1-gamma (911 aa).

Residues 1–23 (MDWHSFRIAALLLTSLVVLEVNS) form the signal peptide. Residues 24–49 (EFQIQVRDHNAKNGTIKWHSIRRQKR) constitute a propeptide that is removed on maturation. Cadherin domains are found at residues 50 to 157 (EWIK…PPVF), 158 to 269 (SMTT…IPYL), and 270 to 389 (EQSS…QPGS). Over 50 to 519 (EWIKFAAACR…PNVDNVHFGP (470 aa)) the chain is Extracellular. An N-linked (GlcNAc...) (high mannose) asparagine glycan is attached at N110. N180 is a glycosylation site (N-linked (GlcNAc...) asparagine). N-linked (GlcNAc...) asparagine glycosylation is present at N401. The chain crosses the membrane as a helical span at residues 520-540 (AGIGLLIMGFLVLGLVPFLLI). Over 541–911 (SCDCGGAPGG…GMIGNLSIPP (371 aa)) the chain is Cytoplasmic. Desmoglein repeat repeat units follow at residues 783-809 (AYPS…TVRE), 810-839 (SYTT…ERVV), 840-869 (GPIS…ERVI), and 870-897 (APGS…ERVI). The stretch at 898–911 (QPTSGMIGNLSIPP) is one Desmoglein repeat 5; truncated repeat.

In terms of assembly, interacts with DSC3; there is evidence to suggest that the interaction promotes cell-cell adhesion of keratinocytes. In terms of tissue distribution, expressed in epidermis, brain, liver, skeletal, muscle and testis.

The protein resides in the cell membrane. Its subcellular location is the cell junction. It localises to the desmosome. It is found in the cytoplasm. The protein localises to the nucleus. Its function is as follows. Component of intercellular desmosome junctions. Involved in the interaction of plaque proteins and intermediate filaments mediating cell-cell adhesion. In Mus musculus (Mouse), this protein is Desmoglein-1-gamma (Dsg1c).